The sequence spans 295 residues: Protein SSO2 (295 aa).

Topologically, residues 1–269 (MSNANPYENN…ARKARKNKIR (269 aa)) are cytoplasmic. Phosphoserine occurs at positions 31 and 34. Residues 39–100 (AFMNKINSIN…ATDLQYQLKA (62 aa)) are a coiled coil. Residues 194 to 256 (LAEVQARHQE…EQGVGHTNKA (63 aa)) enclose the t-SNARE coiled-coil homology domain. A helical; Anchor for type IV membrane protein transmembrane segment spans residues 270 to 291 (CLIICFIIFAIVVVVVVVPSVV). At 292–295 (ETRK) the chain is on the extracellular side.

The protein belongs to the syntaxin family.

It is found in the membrane. Its function is as follows. Required for vesicle fusion with the plasma membrane. The protein is Protein SSO2 (SSO2) of Saccharomyces cerevisiae (strain ATCC 204508 / S288c) (Baker's yeast).